The chain runs to 130 residues: DNA-directed RNA polymerase subunit omega (130 aa).

Disordered stretches follow at residues 79–98 (EPEP…VDAD) and 109–130 (EEEL…EEDE).

This sequence belongs to the RNA polymerase subunit omega family. As to quaternary structure, the RNAP catalytic core consists of 2 alpha, 1 beta, 1 beta' and 1 omega subunit. When a sigma factor is associated with the core the holoenzyme is formed, which can initiate transcription.

The enzyme catalyses RNA(n) + a ribonucleoside 5'-triphosphate = RNA(n+1) + diphosphate. Its function is as follows. Promotes RNA polymerase assembly. Latches the N- and C-terminal regions of the beta' subunit thereby facilitating its interaction with the beta and alpha subunits. In Bradyrhizobium diazoefficiens (strain JCM 10833 / BCRC 13528 / IAM 13628 / NBRC 14792 / USDA 110), this protein is DNA-directed RNA polymerase subunit omega (rpoZ).